A 360-amino-acid chain; its full sequence is NADH-quinone oxidoreductase subunit H (360 aa).

The next 8 membrane-spanning stretches (helical) occupy residues 22-42, 97-117, 130-150, 170-190, 208-228, 255-275, 292-312, and 336-356; these read ITVG…IPLI, ALFY…WAVI, IGLL…IIAG, ISYE…SGSM, VFSW…ISAV, GFAF…IAAL, WGFI…AVLY, and VLIP…ISPL.

It belongs to the complex I subunit 1 family. NDH-1 is composed of 14 different subunits. Subunits NuoA, H, J, K, L, M, N constitute the membrane sector of the complex.

It localises to the cell inner membrane. The catalysed reaction is a quinone + NADH + 5 H(+)(in) = a quinol + NAD(+) + 4 H(+)(out). Functionally, NDH-1 shuttles electrons from NADH, via FMN and iron-sulfur (Fe-S) centers, to quinones in the respiratory chain. The immediate electron acceptor for the enzyme in this species is believed to be ubiquinone. Couples the redox reaction to proton translocation (for every two electrons transferred, four hydrogen ions are translocated across the cytoplasmic membrane), and thus conserves the redox energy in a proton gradient. This subunit may bind ubiquinone. The protein is NADH-quinone oxidoreductase subunit H of Neisseria meningitidis serogroup C / serotype 2a (strain ATCC 700532 / DSM 15464 / FAM18).